The primary structure comprises 255 residues: 1-(5-phosphoribosyl)-5-[(5-phosphoribosylamino)methylideneamino] imidazole-4-carboxamide isomerase (255 aa).

D8 serves as the catalytic Proton acceptor. D129 acts as the Proton donor in catalysis.

This sequence belongs to the HisA/HisF family.

It is found in the cytoplasm. The catalysed reaction is 1-(5-phospho-beta-D-ribosyl)-5-[(5-phospho-beta-D-ribosylamino)methylideneamino]imidazole-4-carboxamide = 5-[(5-phospho-1-deoxy-D-ribulos-1-ylimino)methylamino]-1-(5-phospho-beta-D-ribosyl)imidazole-4-carboxamide. It functions in the pathway amino-acid biosynthesis; L-histidine biosynthesis; L-histidine from 5-phospho-alpha-D-ribose 1-diphosphate: step 4/9. This Prochlorococcus marinus (strain MIT 9303) protein is 1-(5-phosphoribosyl)-5-[(5-phosphoribosylamino)methylideneamino] imidazole-4-carboxamide isomerase.